We begin with the raw amino-acid sequence, 116 residues long: Transcriptional regulator WhiB4 (116 aa).

In terms of domain architecture, 4Fe-4S Wbl-type spans 36–92 (LCRATDPDELFVRGAAQRKAAVICRHCPVMQECGADALDNKVEFGVWGGMTERQRRA). [4Fe-4S] cluster contacts are provided by cysteine 37, cysteine 59, cysteine 62, and cysteine 68.

This sequence belongs to the WhiB family. It depends on [4Fe-4S] cluster as a cofactor. The Fe-S cluster can be nitrosylated by nitric oxide (NO). Post-translationally, upon Fe-S cluster removal intramolecular disulfide bonds are formed.

It localises to the cytoplasm. Acts as a transcriptional regulator. Probably redox-responsive. The apo- but not holo-form probably binds DNA. Plays a role in lipooligosaccharide (LOS) biosynthesis by regulating LOS gene expression. The chain is Transcriptional regulator WhiB4 (whiB4) from Mycobacterium marinum (strain ATCC BAA-535 / M).